A 1037-amino-acid polypeptide reads, in one-letter code: MCIPKSNHKKLVDDCYPPPKALITSAPEYRPNSNELGRLTYYAQNKPAKLTKVGNLLESKAQADARAAKASGPAADKGKAALMITLAITKNLLTECKNSLNYFIKPSQSIIAAALDAAQPTSARPRDLEISARAASAFYALASFLDPASSVVDEGFQRLLRSFALLAVERPLGADATLGEDAEQRNRTRLIGLGALAGAVASDAIYSSNFKQLLSLLTPALVENAKANRVTLDWLRSESNKATEGEPTYAEFNIAKKPLAIRRTRSISAHVAGEKGPSSEDVISAAIGTLRGLLRHADAAQVQSIVQNVIAWLDNKSALSIPVPKDGRQLVSHWDDPEWCCWLAESLCSWTSLQYRFVVLDTLVDHLAENGEGKATNKHLSLIQMSRTILTGQLSLIGLSTSDTLSNLCALAVRRVYKDTRDSLLPPLVDCISGLGTHVYYADQINDIVEEISGRIAALQMPESISDAASVKASNNLGAVHRGQQQDLSSHLHRQRLANAGPEQRDESIRVLLFCLQGVLKATHQSSGEIHEAVDVKSNGAEKGKAAAASTDSKIGLAHAGTRNRVAPASILPTASLLASPNHAVRLAYAQTLITLFRDEFDREQLERESAVFAAAPIGEKVSDAIGVVHAIGAAAHVMCLSKSLSPPAQVLGNLRESPLELLPQIDRINADPGRPGSLSSGGSGTPAAESTAALPVDYVAVAQALEHAVTALPCSAALALTPMLVALDKDAGSRLTVHGATVNTGLENQRRLSSRMVAARVLAKLGETFDTDSVSRAAQGVLSQIPSLGIEPGPSPVGGLTLPSEVVPFSAVGSINQLGESSSSSSPSLNGALVINSLASSSKLQSATQLDAATLKRWLERDWNVGIAVDEAFAGSSPYAHSSLGTGSQQASRRPSYTPINGLSAGGNAFVNGSNASSASVNKNSRISMQAPSTGVNDLREALGTAASLSSKQANGTTQDGSLSTDRRASRRESRRGPVVTSANGSNGTSAVAILDSLKVGVDEDASRLGRDTSWSAIPAKGITNGTAPISPPYTS.

3 disordered regions span residues alanine 881–isoleucine 901, alanine 947–asparagine 988, and aspartate 1006–serine 1037. Over residues alanine 948–serine 965 the composition is skewed to polar residues. Basic and acidic residues predominate over residues threonine 966 to arginine 977.

It belongs to the EFR3 family.

This is Protein EFR3 (EFR3) from Mycosarcoma maydis (Corn smut fungus).